The sequence spans 546 residues: CTP synthase (546 aa).

An amidoligase domain region spans residues 1-266 (MAKYYIFITG…DSYVCDRFCI (266 aa)). Ser14 contributes to the CTP binding site. Residue Ser14 coordinates UTP. ATP-binding positions include 15 to 20 (SLGKGI) and Asp72. Residues Asp72 and Glu140 each coordinate Mg(2+). CTP-binding positions include 147–149 (DIE), 187–192 (KTKPTQ), and Lys223. Residues 187-192 (KTKPTQ) and Lys223 contribute to the UTP site. One can recognise a Glutamine amidotransferase type-1 domain in the interval 291–544 (NIGIIGKYTE…VKAAFDFKNK (254 aa)). An L-glutamine-binding site is contributed by Gly352. Cys379 serves as the catalytic Nucleophile; for glutamine hydrolysis. L-glutamine-binding positions include 380–383 (LGMQ), Glu403, and Arg470. Active-site residues include His517 and Glu519.

It belongs to the CTP synthase family. In terms of assembly, homotetramer.

It catalyses the reaction UTP + L-glutamine + ATP + H2O = CTP + L-glutamate + ADP + phosphate + 2 H(+). The catalysed reaction is L-glutamine + H2O = L-glutamate + NH4(+). It carries out the reaction UTP + NH4(+) + ATP = CTP + ADP + phosphate + 2 H(+). It functions in the pathway pyrimidine metabolism; CTP biosynthesis via de novo pathway; CTP from UDP: step 2/2. With respect to regulation, allosterically activated by GTP, when glutamine is the substrate; GTP has no effect on the reaction when ammonia is the substrate. The allosteric effector GTP functions by stabilizing the protein conformation that binds the tetrahedral intermediate(s) formed during glutamine hydrolysis. Inhibited by the product CTP, via allosteric rather than competitive inhibition. In terms of biological role, catalyzes the ATP-dependent amination of UTP to CTP with either L-glutamine or ammonia as the source of nitrogen. Regulates intracellular CTP levels through interactions with the four ribonucleotide triphosphates. This chain is CTP synthase, found in Wigglesworthia glossinidia brevipalpis.